The chain runs to 365 residues: Aminomethyltransferase (365 aa).

Belongs to the GcvT family. The glycine cleavage system is composed of four proteins: P, T, L and H.

It carries out the reaction N(6)-[(R)-S(8)-aminomethyldihydrolipoyl]-L-lysyl-[protein] + (6S)-5,6,7,8-tetrahydrofolate = N(6)-[(R)-dihydrolipoyl]-L-lysyl-[protein] + (6R)-5,10-methylene-5,6,7,8-tetrahydrofolate + NH4(+). In terms of biological role, the glycine cleavage system catalyzes the degradation of glycine. This chain is Aminomethyltransferase, found in Aeromonas salmonicida (strain A449).